A 349-amino-acid polypeptide reads, in one-letter code: GTPase Obg (349 aa).

The 159-residue stretch at 1–159 (MKFLDQAKVY…LWIWLRLKLI (159 aa)) folds into the Obg domain. One can recognise an OBG-type G domain in the interval 160–327 (ADAGLIGLPN…VLRALMRVVQ (168 aa)). GTP contacts are provided by residues 166-173 (GLPNAGKS), 191-195 (FTTLH), 212-215 (DIPG), 279-282 (SQID), and 308-310 (SSA). 2 residues coordinate Mg(2+): Ser-173 and Thr-193.

Belongs to the TRAFAC class OBG-HflX-like GTPase superfamily. OBG GTPase family. As to quaternary structure, monomer. Mg(2+) is required as a cofactor.

The protein resides in the cytoplasm. Its function is as follows. An essential GTPase which binds GTP, GDP and possibly (p)ppGpp with moderate affinity, with high nucleotide exchange rates and a fairly low GTP hydrolysis rate. Plays a role in control of the cell cycle, stress response, ribosome biogenesis and in those bacteria that undergo differentiation, in morphogenesis control. This Chelativorans sp. (strain BNC1) protein is GTPase Obg.